Here is a 115-residue protein sequence, read N- to C-terminus: T cell receptor beta variable 7-8 (115 aa).

A signal peptide spans 1 to 21 (MGTRLLCWVVLGFLGTDHTGA). One can recognise an Ig-like domain in the interval 22-115 (GVSQSPRYKV…SAVYLCASSL (94 aa)). A disulfide bond links Cys42 and Cys111.

As to quaternary structure, alpha-beta TR is a heterodimer composed of an alpha and beta chain; disulfide-linked. The alpha-beta TR is associated with the transmembrane signaling CD3 coreceptor proteins to form the TR-CD3 (TcR or TCR). The assembly of alpha-beta TR heterodimers with CD3 occurs in the endoplasmic reticulum where a single alpha-beta TR heterodimer associates with one CD3D-CD3E heterodimer, one CD3G-CD3E heterodimer and one CD247 homodimer forming a stable octameric structure. CD3D-CD3E and CD3G-CD3E heterodimers preferentially associate with TR alpha and TR beta chains, respectively. The association of the CD247 homodimer is the last step of TcR assembly in the endoplasmic reticulum and is required for transport to the cell surface.

The protein localises to the cell membrane. Its function is as follows. V region of the variable domain of T cell receptor (TR) beta chain that participates in the antigen recognition. Alpha-beta T cell receptors are antigen specific receptors which are essential to the immune response and are present on the cell surface of T lymphocytes. Recognize peptide-major histocompatibility (MH) (pMH) complexes that are displayed by antigen presenting cells (APC), a prerequisite for efficient T cell adaptive immunity against pathogens. Binding of alpha-beta TR to pMH complex initiates TR-CD3 clustering on the cell surface and intracellular activation of LCK that phosphorylates the ITAM motifs of CD3G, CD3D, CD3E and CD247 enabling the recruitment of ZAP70. In turn ZAP70 phosphorylates LAT, which recruits numerous signaling molecules to form the LAT signalosome. The LAT signalosome propagates signal branching to three major signaling pathways, the calcium, the mitogen-activated protein kinase (MAPK) kinase and the nuclear factor NF-kappa-B (NF-kB) pathways, leading to the mobilization of transcription factors that are critical for gene expression and essential for T cell growth and differentiation. The T cell repertoire is generated in the thymus, by V-(D)-J rearrangement. This repertoire is then shaped by intrathymic selection events to generate a peripheral T cell pool of self-MH restricted, non-autoaggressive T cells. Post-thymic interaction of alpha-beta TR with the pMH complexes shapes TR structural and functional avidity. This chain is T cell receptor beta variable 7-8, found in Homo sapiens (Human).